A 298-amino-acid polypeptide reads, in one-letter code: Mitochondrial 2-oxodicarboxylate carrier (298 aa).

3 Solcar repeats span residues 10–99 (HETS…YKKF), 106–195 (SPGL…VKNI), and 204–293 (LEFL…TYAW). Transmembrane regions (helical) follow at residues 16 to 36 (VAAGGSAGLVEICLMHPLDVV), 69 to 88 (FGFYKGIIPPILAETPKRAV), 112 to 132 (LIAGLGSGLTEAVVVNPFEVV), 166 to 186 (GLNKGLTATLGRHGIFNMVYF), 204 to 224 (LEFLRKFGIGFVSGTMGSVFN), and 276 to 296 (LGPGGGVMLLVYEYTYAWLQE).

Belongs to the mitochondrial carrier (TC 2.A.29) family.

It is found in the mitochondrion inner membrane. It catalyses the reaction 2-oxoadipate(in) + 2-oxoglutarate(out) = 2-oxoadipate(out) + 2-oxoglutarate(in). The enzyme catalyses hexanedioate(in) + 2-oxoglutarate(out) = hexanedioate(out) + 2-oxoglutarate(in). The catalysed reaction is L-2-aminoadipate(in) + 2-oxoglutarate(out) = L-2-aminoadipate(out) + 2-oxoglutarate(in). It carries out the reaction glutarate(in) + 2-oxoglutarate(out) = glutarate(out) + 2-oxoglutarate(in). It catalyses the reaction 2-oxoheptanedioate(in) + 2-oxoglutarate(out) = 2-oxoheptanedioate(out) + 2-oxoglutarate(in). The enzyme catalyses heptanedioate(in) + 2-oxoglutarate(out) = heptanedioate(out) + 2-oxoglutarate(in). The catalysed reaction is citrate(in) + 2-oxoglutarate(out) = citrate(out) + 2-oxoglutarate(in). Functionally, transports dicarboxylates across the inner membranes of mitochondria by a counter-exchange mechanism. Can transport 2-oxoadipate (2-oxohexanedioate), 2-oxoglutarate, adipate (hexanedioate), glutarate, and to a lesser extent, pimelate (heptanedioate), 2-oxopimelate (2-oxoheptanedioate), 2-aminoadipate (2-aminohexanedioate), oxaloacetate, and citrate. Plays a central role in catabolism of lysine, hydroxylysine, and tryptophan, by transporting common metabolite intermediates (such as 2-oxoadipate) into the mitochondria, where it is converted into acetyl-CoA and can enter the citric acid (TCA) cycle. The polypeptide is Mitochondrial 2-oxodicarboxylate carrier (Slc25a21) (Mus musculus (Mouse)).